Consider the following 122-residue polypeptide: UPF0102 protein CA_C1763 (122 aa).

The protein belongs to the UPF0102 family.

In Clostridium acetobutylicum (strain ATCC 824 / DSM 792 / JCM 1419 / IAM 19013 / LMG 5710 / NBRC 13948 / NRRL B-527 / VKM B-1787 / 2291 / W), this protein is UPF0102 protein CA_C1763.